Reading from the N-terminus, the 1264-residue chain is ATP-dependent helicase/nuclease subunit A (1264 aa).

The UvrD-like helicase ATP-binding domain maps to 12–482 (EQFTDSQWQA…IILAENFRSR (471 aa)). ATP is bound at residue 33–40 (ASAGSGKT). Positions 520–808 (SEAADYSTEL…RVMTIHASKG (289 aa)) constitute a UvrD-like helicase C-terminal domain.

The protein belongs to the helicase family. AddA subfamily. In terms of assembly, heterodimer of AddA and AddB/RexB. It depends on Mg(2+) as a cofactor.

It carries out the reaction Couples ATP hydrolysis with the unwinding of duplex DNA by translocating in the 3'-5' direction.. It catalyses the reaction ATP + H2O = ADP + phosphate + H(+). Its function is as follows. The heterodimer acts as both an ATP-dependent DNA helicase and an ATP-dependent, dual-direction single-stranded exonuclease. Recognizes the chi site generating a DNA molecule suitable for the initiation of homologous recombination. The AddA nuclease domain is required for chi fragment generation; this subunit has the helicase and 3' -&gt; 5' nuclease activities. The protein is ATP-dependent helicase/nuclease subunit A of Enterococcus faecalis (strain ATCC 700802 / V583).